The chain runs to 434 residues: Enolase (434 aa).

Q167 lines the (2R)-2-phosphoglycerate pocket. E209 acts as the Proton donor in catalysis. Mg(2+) is bound by residues D246, E291, and D318. Residues K343, R372, S373, and K394 each contribute to the (2R)-2-phosphoglycerate site. K343 serves as the catalytic Proton acceptor.

It belongs to the enolase family. Component of the RNA degradosome, a multiprotein complex involved in RNA processing and mRNA degradation. The cofactor is Mg(2+).

The protein resides in the cytoplasm. Its subcellular location is the secreted. The protein localises to the cell surface. It catalyses the reaction (2R)-2-phosphoglycerate = phosphoenolpyruvate + H2O. Its pathway is carbohydrate degradation; glycolysis; pyruvate from D-glyceraldehyde 3-phosphate: step 4/5. Its function is as follows. Catalyzes the reversible conversion of 2-phosphoglycerate (2-PG) into phosphoenolpyruvate (PEP). It is essential for the degradation of carbohydrates via glycolysis. The chain is Enolase from Buchnera aphidicola subsp. Schizaphis graminum (strain Sg).